The sequence spans 282 residues: Putative peroxisomal biogenesis factor 19 (282 aa).

The disordered stretch occupies residues Gln-73–Pro-95. Residue Cys-279 is modified to Cysteine methyl ester. Cys-279 carries S-farnesyl cysteine lipidation. The propeptide at Ser-280–Met-282 is removed in mature form.

Belongs to the peroxin-19 family.

The protein resides in the peroxisome. The sequence is that of Putative peroxisomal biogenesis factor 19 (prx-19) from Caenorhabditis elegans.